The following is a 406-amino-acid chain: Probable endo-xylogalacturonan hydrolase A (406 aa).

The first 18 residues, 1-18 (MLYPRNLALFSLLSLSSA), serve as a signal peptide directing secretion. 4 PbH1 repeats span residues 183-213 (TQHVTFKNLRMDATSNSQNPPKNTDGFDIGA), 214-235 (STHVTISSVSVTNDDDCVAFKP), 237-257 (SNYVTVEDVTCTGSHGISVGS), and 299-320 (VKNVTFSDFNVRGCDYAFQIES). The active-site Proton donor is the Asp-228. His-251 is an active-site residue. An N-linked (GlcNAc...) asparagine glycan is attached at Asn-301.

Belongs to the glycosyl hydrolase 28 family.

The protein localises to the secreted. In terms of biological role, pectinolytic enzyme involved in the degradation of xylogalacturonan (xga), a galacturonan backbone heavily substituted with xylose, and which is one important component of the hairy regions of pectin. Activity requires a galacturonic acid backbone substituted with xylose. This chain is Probable endo-xylogalacturonan hydrolase A (xghA), found in Aspergillus fumigatus (strain ATCC MYA-4609 / CBS 101355 / FGSC A1100 / Af293) (Neosartorya fumigata).